Here is a 330-residue protein sequence, read N- to C-terminus: MELLSTPHSIEVSNITCDSFRISWTMENSDLERVTHYFIDLNKKENKNSNKFKHRDVPTKLVAKAVPLPMTVRGHWFLSPRTEYSVAVQTAVKQSDGEYLVSGWSETVEFCTGDYAKEHLAQLQEKAEQIAGRMLRFSVFYRNHHKEYFQHARTHCGNMLQPYLKDNSGSHGSPTSGMLHGVFFSCNTEFNTGQPPQDSPYGRWRFQIPAQRLFNPSTNLYFADFYCMYTAYHYAILVLAPKGSLGDRFCRDRLPLLDIACNKFLTCSVEDGELVFRHAQDLILEIIYTEPVDLSLGTLGEISGHQLMSLSTADAKKDPSCKTCNISVGR.

Residues 6–115 (TPHSIEVSNI…ETVEFCTGDY (110 aa)) form the Fibronectin type-III domain. Residues asparagine 14 and asparagine 325 are each glycosylated (N-linked (GlcNAc...) asparagine).

This sequence belongs to the PHYHIP family. In terms of assembly, interacts with PHYH and ADGRB1.

Functionally, its interaction with PHYH suggests a role in the development of the central system. In Bos taurus (Bovine), this protein is Phytanoyl-CoA hydroxylase-interacting protein (PHYHIP).